The chain runs to 49 residues: Small ribosomal subunit protein eS31 (49 aa).

C21, C24, C39, and C42 together coordinate Zn(2+). The C4-type zinc finger occupies 21 to 42 (CPRCGNGVFLAEHEDRMSCGRC).

It belongs to the eukaryotic ribosomal protein eS31 family. In terms of assembly, part of the 30S ribosomal subunit. Zn(2+) serves as cofactor.

The chain is Small ribosomal subunit protein eS31 from Methanothrix thermoacetophila (strain DSM 6194 / JCM 14653 / NBRC 101360 / PT) (Methanosaeta thermophila).